A 1585-amino-acid chain; its full sequence is Adhesion G protein-coupled receptor B2 (1585 aa).

A signal peptide spans 1-32 (MENTGWMGKGHRMTPACPLLLSVILSLRLATA). Over 33-936 (FDPAPSACSA…ELAGSPSVPL (904 aa)) the chain is Extracellular. Residues N106, N191, and N192 are each glycosylated (N-linked (GlcNAc...) asparagine). Residues 229-238 (AGAGSTTTTS) show a composition bias toward low complexity. Residues 229-271 (AGAGSTTTTSPGPPAAHTLSNALVPGGPAPPAEADLHSGSSND) form a disordered region. Residue S266 is glycosylated (O-linked (Xyl...) (chondroitin sulfate) serine). TSP type-1 domains lie at 309–362 (DPAA…ATCP), 364–417 (HGVW…AACP), 419–472 (EGQW…LECP), and 475–528 (DSKW…KRCP). Cystine bridges form between C321–C355, C325–C361, C336–C345, C376–C411, C380–C416, C391–C401, C431–C466, C435–C471, C446–C456, C487–C522, C491–C527, C502–C512, C534–C569, and C557–C587. The N-linked (GlcNAc...) asparagine glycan is linked to N356. N-linked (GlcNAc...) asparagine glycosylation occurs at N437. N560 and N645 each carry an N-linked (GlcNAc...) asparagine glycan. Residues 757-924 (DRLFLPKEVL…AVLAQPPKDL (168 aa)) enclose the GAIN-B domain. The disordered stretch occupies residues 767-806 (SLSSPGKPATSGAAGSPGRGRGPGTVPPGPGHSHQRLLPA). The span at 769 to 780 (SSPGKPATSGAA) shows a compositional bias: low complexity. N867 is a glycosylation site (N-linked (GlcNAc...) asparagine). Disulfide bonds link C874–C906 and C894–C908. A GPS region spans residues 874–924 (CASWDYSRADASSGDWDTENCQTLETQAAHTRCQCQHLSTFAVLAQPPKDL). Residues 937 to 957 (VIGCAVSCMALLTLLAIYAAF) form a helical membrane-spanning segment. The Cytoplasmic segment spans residues 958 to 965 (WRFIKSER). The helical transmembrane segment at 966-986 (SIILLNFCLSILASNILILVG) threads the bilayer. The Extracellular segment spans residues 987-994 (QSRVLSKG). The helical transmembrane segment at 995–1015 (VCTMTAAFLHFFFLSSFCWVL) threads the bilayer. The Cytoplasmic portion of the chain corresponds to 1016–1036 (TEAWQSYLAVIGRMRTRLVRK). Residues 1037 to 1057 (RFLCLGWGLPALVVAVSVGFT) form a helical membrane-spanning segment. The Extracellular portion of the chain corresponds to 1058–1078 (RTKGYGTSSYCWLSLEGGLLY). A helical membrane pass occupies residues 1079–1099 (AFVGPAAVIVLVNMLIGIIVF). Residues 1100-1121 (NKLMARDGISDKSKKQRAGSER) are Cytoplasmic-facing. The helical transmembrane segment at 1122 to 1142 (CPWASLLLPCSACGAVPSPLL) threads the bilayer. Residues 1143–1153 (SSASARNAMAS) lie on the Extracellular side of the membrane. The helical transmembrane segment at 1154–1174 (LWSSCVVLPLLALTWMSAVLA) threads the bilayer. At 1175–1585 (MTDRRSVLFQ…PPDGDFQTEV (411 aa)) the chain is on the cytoplasmic side. Y1351 is subject to Phosphotyrosine. Disordered regions lie at residues 1359 to 1385 (LSLQ…PRRA), 1423 to 1454 (FQPP…GSTM), and 1498 to 1585 (YRSQ…QTEV). Residues 1372 to 1382 (DAPRARPEGTP) are compositionally biased toward basic and acidic residues. Over residues 1543-1552 (SWSTFKSMTL) the composition is skewed to polar residues. Residues 1575–1585 (EPPDGDFQTEV) show a composition bias toward acidic residues.

It belongs to the G-protein coupled receptor 2 family. Adhesion G-protein coupled receptor (ADGR) subfamily. Heterodimer of 2 chains generated by proteolytic processing; the large extracellular N-terminal fragment and the membrane-bound C-terminal fragment predominantly remain associated and non-covalently linked. Interacts with GABPB2. Interacts (via carboxy-terminus) with TAX1BP3. Interacts with GNAZ. Interacts with SH3GL2. In terms of processing, glycosylated. Post-translationally, autoproteolytically processed at the GPS region of the GAIN-B domain; this cleavage modulates receptor activity. Additionally, furin is involved in the cleavage at another site, in the middle of the extracellular domain, generating a soluble fragment. Detected in cerebrospinal fluid (at protein level). Strongly expressed in brain. Also detected in heart, thymus, skeletal muscle, and different cell lines.

It is found in the cell membrane. It localises to the secreted. Its activity is regulated as follows. Receptor activity is regulated by proteolytic processing. The long N-terminal has a an inhibitory effect on the constitutive signaling activity. Removal of the N-terminal region induces an increase of the receptor activity. Orphan G-protein coupled receptor involved in cell adhesion and probably in cell-cell interactions. Activates NFAT-signaling pathway, a transcription factor, via the G-protein GNAZ. Involved in angiogenesis inhibition. This is Adhesion G protein-coupled receptor B2 from Homo sapiens (Human).